The sequence spans 792 residues: Glucocorticoid receptor (792 aa).

Positions 1–15 (MDSKESLAPPGRDEV) are enriched in basic and acidic residues. Positions 1-25 (MDSKESLAPPGRDEVPSSLLGRGRG) are disordered. Positions 1 to 436 (MDSKESLAPP…STATGPPPKL (436 aa)) are modulating. Position 24 is an omega-N-methylarginine (Arg24). Phosphoserine is present on Ser46. A disordered region spans residues 67 to 98 (SKGSASNAQQQQQQQQQQQQQQQQQPQPDLSK). Residues 75-94 (QQQQQQQQQQQQQQQQQPQP) show a composition bias toward low complexity. A phosphoserine mark is found at Ser131, Ser152, and Ser159. Polar residues predominate over residues 148-162 (NRSTSRPENPKSSTP). The tract at residues 148–201 (NRSTSRPENPKSSTPAAGCATPTEKEFPQTHSDPSSEQQNRKSQPGTNGGSVKL) is disordered. Thr168 carries the post-translational modification Phosphothreonine. Residues 176-193 (QTHSDPSSEQQNRKSQPG) show a composition bias toward polar residues. A phosphoserine mark is found at Ser221, Ser229, Ser243, and Ser284. Glycyl lysine isopeptide (Lys-Gly) (interchain with G-Cter in SUMO); alternate cross-links involve residues Lys294 and Lys310. Glycyl lysine isopeptide (Lys-Gly) (interchain with G-Cter in SUMO2); alternate cross-links involve residues Lys294 and Lys310. A phosphoserine mark is found at Ser324 and Ser421. Residues 434-509 (PKLCLVCSDE…AGMNLEARKT (76 aa)) constitute a DNA-binding region (nuclear receptor). Residue Lys435 forms a Glycyl lysine isopeptide (Lys-Gly) (interchain with G-Cter in ubiquitin) linkage. 2 consecutive NR C4-type zinc fingers follow at residues 437 to 457 (CLVC…CGSC) and 473 to 497 (CAGR…YRKC). N6-acetyllysine is present on residues Lys496, Lys508, Lys510, and Lys511. Positions 501–792 (GMNLEARKTK…NIKKLLFHQK (292 aa)) are interaction with CLOCK. The tract at residues 503–538 (NLEARKTKKKIKGIQQATAGVSQDTSENANKTIVPA) is hinge. The NR LBD domain occupies 539 to 773 (ALPQLTPTLV…FPEMLAEIIT (235 aa)). The segment at 547-712 (LVSLLEVIEP…EIRMTYIKEL (166 aa)) is interaction with CRY1. Lys718 participates in a covalent cross-link: Glycyl lysine isopeptide (Lys-Gly) (interchain with G-Cter in SUMO).

Belongs to the nuclear hormone receptor family. NR3 subfamily. As to quaternary structure, heteromultimeric cytoplasmic complex with HSP90AA1, HSPA1A/HSPA1B, and FKBP5 or another immunophilin such as PPID, STIP1, or the immunophilin homolog PPP5C. Upon ligand binding FKBP5 dissociates from the complex and FKBP4 takes its place, thereby linking the complex to dynein and mediating transport to the nucleus, where the complex dissociates. Probably forms a complex composed of chaperones HSP90 and HSP70, co-chaperones CDC37, PPP5C, TSC1 and client protein TSC2, CDK4, AKT, RAF1 and NR3C1; this complex does not contain co-chaperones STIP1/HOP and PTGES3/p23. Directly interacts with UNC45A. Binds to DNA as a homodimer, and as heterodimer with NR3C2 or the retinoid X receptor. Binds STAT5A and STAT5B homodimers and heterodimers. Interacts with NRIP1, POU2F1, POU2F2 and TRIM28. Interacts with several coactivator complexes, including the SMARCA4 complex, CREBBP/EP300, TADA2L (Ada complex) and p160 coactivators such as NCOA2 and NCOA6. Interaction with BAG1 inhibits transactivation. Interacts with HEXIM1 and TGFB1I1. Interacts with NCOA1. Interacts with NCOA3, SMARCA4, SMARCC1, SMARCD1, and SMARCE1. Interacts with CLOCK, CRY1 and CRY2 in a ligand-dependent fashion. Interacts with CIART. Interacts with RWDD3. Interacts with UBE2I/UBC9 and this interaction is enhanced in the presence of RWDD3. Interacts with GRIP1. Interacts with NR4A3 (via nuclear receptor DNA-binding domain), represses transcription activity of NR4A3 on the POMC promoter Nur response element (NurRE). Directly interacts with PNRC2 to attract and form a complex with UPF1 and DCP1A; the interaction leads to rapid mRNA degradation. Interacts with GSK3B. Interacts with FNIP1 and FNIP2. Interacts (via C-terminus) with HNRNPU (via C-terminus). Interacts with MCM3AP. Interacts (via domain NR LBD) with HSP90AA1 and HSP90AB1. In the absence of hormonal ligand, interacts with TACC1. Interacts (via NR LBD domain) with ZNF764 (via KRAB domain); the interaction regulates transcription factor activity of NR3C1 by directing its actions toward certain biologic pathways. Acetylation by CLOCK reduces its binding to glucocorticoid response elements and its transcriptional activity. Post-translationally, increased proteasome-mediated degradation in response to glucocorticoids. In terms of processing, phosphorylated in the absence of hormone; becomes hyperphosphorylated in the presence of glucocorticoids. Phosphorylated in the absence of hormone; becomes hyperphosphorylated in the presence of glucocorticoid. The Ser-221, Ser-243 and Ser-421-phosphorylated forms are mainly cytoplasmic, and the Ser-229-phosphorylated form is nuclear. Phosphorylation at Ser-229 increases transcriptional activity. Phosphorylation at Ser-221, Ser-243 and Ser-421 decreases signaling capacity. Phosphorylation at Ser-421 may protect from glucocorticoid-induced apoptosis. Phosphorylation at Ser-221 and Ser-229 is not required in regulation of chromosome segregation. May be dephosphorylated by PPP5C, attenuates NR3C1 action. Sumoylation at Lys-294 and Lys-310 negatively regulates its transcriptional activity. Sumoylation at Lys-718 positively regulates its transcriptional activity in the presence of RWDD3. Sumoylation at Lys-294 and Lys-310 is dispensable whereas sumoylation at Lys-718 is critical for the stimulatory effect of RWDD3 on its transcriptional activity. Heat shock increases sumoylation in a RWDD3-dependent manner. Post-translationally, ubiquitinated. Ubiquitination by UBR5 leads to its degradation: UBR5 specifically recognizes and binds ligand-bound NR3C1 when it is not associated with coactivators (NCOAs). In presence of NCOAs, the UBR5-degron is not accessible, preventing its ubiquitination and degradation. In terms of tissue distribution, expressed in spleen, kidney and liver. Expressed in a circadian manner in the liver. Expressed at highest level in spleen with lesser amounts in kidney and liver.

It is found in the cytoplasm. The protein localises to the nucleus. The protein resides in the mitochondrion. It localises to the cytoskeleton. Its subcellular location is the spindle. It is found in the microtubule organizing center. The protein localises to the centrosome. The protein resides in the chromosome. It localises to the nucleoplasm. Its function is as follows. Receptor for glucocorticoids (GC). Has a dual mode of action: as a transcription factor that binds to glucocorticoid response elements (GRE), both for nuclear and mitochondrial DNA, and as a modulator of other transcription factors. Affects inflammatory responses, cellular proliferation and differentiation in target tissues. Involved in chromatin remodeling. Plays a role in rapid mRNA degradation by binding to the 5' UTR of target mRNAs and interacting with PNRC2 in a ligand-dependent manner which recruits the RNA helicase UPF1 and the mRNA-decapping enzyme DCP1A, leading to RNA decay. Could act as a coactivator for STAT5-dependent transcription upon growth hormone (GH) stimulation and could reveal an essential role of hepatic GR in the control of body growth. In terms of biological role, has transcriptional activation and repression activity. Mediates glucocorticoid-induced apoptosis. Promotes accurate chromosome segregation during mitosis. May act as a tumor suppressor. May play a negative role in adipogenesis through the regulation of lipolytic and antilipogenic gene expression. Functionally, acts as a dominant negative inhibitor of isoform 1. Has intrinsic transcriptional activity independent of isoform Alpha when both isoforms are coexpressed. Loses this transcription modulator function on its own. Has no hormone-binding activity. May play a role in controlling glucose metabolism by maintaining insulin sensitivity. Reduces hepatic gluconeogenesis through down-regulation of PEPCK in an isoform Alpha-dependent manner. Directly regulates STAT1 expression in isoform Alpha-independent manner. In Mus musculus (Mouse), this protein is Glucocorticoid receptor (Nr3c1).